Consider the following 244-residue polypeptide: Tubulin-folding cofactor B (244 aa).

N-acetylmethionine is present on Met-1. The residue at position 98 (Tyr-98) is a Phosphotyrosine. Ser-110 bears the Phosphoserine mark. Residues 183 to 225 (GLTDFKPGYWIGIRYDEPLGKNDGSVNGKRYFECQAKYGAFVK) enclose the CAP-Gly domain. An N6-acetyllysine modification is found at Lys-219.

This sequence belongs to the TBCB family. As to quaternary structure, supercomplex made of cofactors A to E. Cofactors A and D function by capturing and stabilizing tubulin in a quasi-native conformation. Cofactor E binds to the cofactor D-tubulin complex; interaction with cofactor C then causes the release of tubulin polypeptides that are committed to the native state. Cofactors B and E can form a heterodimer which binds to alpha-tubulin and enhances their ability to dissociate tubulin heterodimers. Interacts with GAN. Interacts with DCTN1. Ubiquitinated in the presence of GAN which targets it for degradation by the proteasome. Post-translationally, phosphorylation by PAK1 is required for normal function.

It is found in the cytoplasm. It localises to the cytoskeleton. Binds to alpha-tubulin folding intermediates after their interaction with cytosolic chaperonin in the pathway leading from newly synthesized tubulin to properly folded heterodimer. Involved in regulation of tubulin heterodimer dissociation. May function as a negative regulator of axonal growth. The polypeptide is Tubulin-folding cofactor B (TBCB) (Bos taurus (Bovine)).